A 303-amino-acid polypeptide reads, in one-letter code: Probable cell division protein WhiA (303 aa).

Residues 272-303 constitute a DNA-binding region (H-T-H motif); sequence SIQQLADSLSRPLTKSGVNHRLRKINKIADEL.

Belongs to the WhiA family.

In terms of biological role, involved in cell division and chromosome segregation. This Streptococcus sanguinis (strain SK36) protein is Probable cell division protein WhiA.